The primary structure comprises 356 residues: Histidinol-phosphate aminotransferase (356 aa).

The residue at position 214 (Lys-214) is an N6-(pyridoxal phosphate)lysine.

The protein belongs to the class-II pyridoxal-phosphate-dependent aminotransferase family. Histidinol-phosphate aminotransferase subfamily. In terms of assembly, homodimer. Pyridoxal 5'-phosphate serves as cofactor.

It catalyses the reaction L-histidinol phosphate + 2-oxoglutarate = 3-(imidazol-4-yl)-2-oxopropyl phosphate + L-glutamate. It functions in the pathway amino-acid biosynthesis; L-histidine biosynthesis; L-histidine from 5-phospho-alpha-D-ribose 1-diphosphate: step 7/9. The polypeptide is Histidinol-phosphate aminotransferase (Escherichia coli O1:K1 / APEC).